The following is a 648-amino-acid chain: Probable LRR receptor-like serine/threonine-protein kinase At4g30520 (648 aa).

The N-terminal stretch at methionine 1–serine 30 is a signal peptide. The Extracellular portion of the chain corresponds to serine 31–leucine 238. 2 N-linked (GlcNAc...) asparagine glycosylation sites follow: asparagine 99 and asparagine 112. LRR repeat units lie at residues leucine 100–proline 125, leucine 127–leucine 148, serine 149–isoleucine 172, and histidine 174–valine 199. N-linked (GlcNAc...) asparagine glycosylation is found at asparagine 158 and asparagine 184. The chain crosses the membrane as a helical span at residues alanine 239–phenylalanine 259. Residues cysteine 260 to arginine 648 are Cytoplasmic-facing. A Phosphothreonine modification is found at threonine 300. Positions phenylalanine 303 to alanine 582 constitute a Protein kinase domain. Residue leucine 309–valine 317 coordinates ATP. Threonine 326 is modified (phosphothreonine). Lysine 331 is a binding site for ATP. 2 positions are modified to phosphoserine: serine 384 and serine 387. The active-site Proton acceptor is aspartate 426. Phosphothreonine is present on residues threonine 459, threonine 460, and threonine 465. Tyrosine 473 is subject to Phosphotyrosine. At serine 475 the chain carries Phosphoserine. At threonine 476 the chain carries Phosphothreonine. At serine 480 the chain carries Phosphoserine. A Phosphothreonine modification is found at threonine 555.

Belongs to the protein kinase superfamily. Ser/Thr protein kinase family.

Its subcellular location is the cell membrane. The enzyme catalyses L-seryl-[protein] + ATP = O-phospho-L-seryl-[protein] + ADP + H(+). The catalysed reaction is L-threonyl-[protein] + ATP = O-phospho-L-threonyl-[protein] + ADP + H(+). The chain is Probable LRR receptor-like serine/threonine-protein kinase At4g30520 from Arabidopsis thaliana (Mouse-ear cress).